Here is a 622-residue protein sequence, read N- to C-terminus: Sodium-coupled monocarboxylate transporter 1 (622 aa).

Residues 1-15 (MVTPGNIGSFTVWDY) lie on the Extracellular side of the membrane. Residues 16–36 (LVFALMLLISAVIGIYYAFAG) form a helical membrane-spanning segment. The Cytoplasmic portion of the chain corresponds to 37 to 51 (GGQKTSKDFLMGGRS). A helical membrane pass occupies residues 52–72 (MTAVPVALSLTASFMSAVTVL). Topologically, residues 73–83 (GTPAEVYRFGA) are extracellular. The helical transmembrane segment at 84-104 (MFIIFAFSYTIVVIISSEVFL) threads the bilayer. Over 105–128 (PVFYRLGITSTYEYLELRFNKFVR) the chain is Cytoplasmic. The helical transmembrane segment at 129-149 (LLGTILFIIQTVLYTGIVIYA) threads the bilayer. The Extracellular segment spans residues 150–161 (PALALNQVTGFD). The chain crosses the membrane as a helical span at residues 162-182 (LWGAVVATGVVCTFYCTMGGL). The Cytoplasmic segment spans residues 183–184 (KA). Residues 185 to 205 (VVWTDVFQVGIMVAGFTSVII) form a helical membrane-spanning segment. Residues 206-241 (RAVVVQGGIGPILNDSYYGDRLNFWDFDPNPLKRHT) are Extracellular-facing. N219 is a glycosylation site (N-linked (GlcNAc...) asparagine). A helical membrane pass occupies residues 242-262 (FWTIVVGGTFTWTGIYGVNQA). Topologically, residues 263 to 283 (QVQRYIACKTRFQAKMSLYVN) are cytoplasmic. Residues 284–304 (LIGLWAILACAVLSGLAMYSI) traverse the membrane as a helical segment. Residues 305–336 (YKDCDPWTAKFVSAPDQLMPYLALDILRDYPG) are Extracellular-facing. The helical transmembrane segment at 337–357 (LPGLFVSCAYSGTLSTVSSSI) threads the bilayer. At 358-389 (NALAAVTVEDLIKPYIRSLSEKKMSWISKGTS) the chain is on the cytoplasmic side. The chain crosses the membrane as a helical span at residues 390-410 (LLYGAICIGMAGIASLMGGLL). The Extracellular portion of the chain corresponds to 411–415 (QAALS). Residues 416 to 436 (IFGMVGGPLLGLFSLGILFPF) traverse the membrane as a helical segment. The Cytoplasmic segment spans residues 437-438 (VN). The chain crosses the membrane as a helical span at residues 439–459 (SLGAVIGLLSGFAISLWVGIG). Over 460–521 (SQIYAPSPSS…LADSWYSLSY (62 aa)) the chain is Extracellular. 2 N-linked (GlcNAc...) asparagine glycosylation sites follow: N481 and N488. Residues 522–542 (LYFSTIGTIVAVLVGVIVSLL) traverse the membrane as a helical segment. At 543–622 (SGGLKQNVNR…KGEKTNGITA (80 aa)) the chain is on the cytoplasmic side. Residues 591 to 622 (DNDMEQGTDNPAFNNMEMTSTEKGEKTNGITA) form a disordered region. Residues 595-609 (EQGTDNPAFNNMEMT) are compositionally biased toward polar residues.

This sequence belongs to the sodium:solute symporter (SSF) (TC 2.A.21) family. As to expression, in the gastrula and neurula stages, expressed in the gastrula anterior endoderm and in the entire circumference of the blastopore lip superficial endoderm. At tailbud stages, abundant expression observed in the ventral midgut region. As development proceeds expression becomes restricted to the liver diverticulum and ultimately to the presumptive gallbladder, by tadpole stage 35. Also present in pronephros and the tip of the tail.

It is found in the apical cell membrane. The catalysed reaction is (S)-lactate(out) + 2 Na(+)(out) = (S)-lactate(in) + 2 Na(+)(in). It carries out the reaction propanoate(out) + 2 Na(+)(out) = propanoate(in) + 2 Na(+)(in). The enzyme catalyses pyruvate(out) + 2 Na(+)(out) = pyruvate(in) + 2 Na(+)(in). It catalyses the reaction acetate(out) + 2 Na(+)(out) = acetate(in) + 2 Na(+)(in). The catalysed reaction is butanoate(out) + 2 Na(+)(out) = butanoate(in) + 2 Na(+)(in). It carries out the reaction nicotinate(out) + 2 Na(+)(out) = nicotinate(in) + 2 Na(+)(in). The enzyme catalyses (R)-3-hydroxybutanoate(out) + 2 Na(+)(out) = (R)-3-hydroxybutanoate(in) + 2 Na(+)(in). It catalyses the reaction acetoacetate(out) + 2 Na(+)(out) = acetoacetate(in) + 2 Na(+)(in). The catalysed reaction is 4-methyl-2-oxopentanoate(out) + 2 Na(+)(out) = 4-methyl-2-oxopentanoate(in) + 2 Na(+)(in). It carries out the reaction 5-oxo-L-proline(out) + 2 Na(+)(out) = 5-oxo-L-proline(in) + 2 Na(+)(in). The enzyme catalyses iodide(out) = iodide(in). It catalyses the reaction chloride(in) = chloride(out). The catalysed reaction is nitrate(in) = nitrate(out). It carries out the reaction bromide(in) = bromide(out). Its function is as follows. Acts as an electrogenic sodium (Na(+)) and chloride (Cl-)-dependent sodium-coupled solute transporter, including transport of monocarboxylates (short-chain fatty acids including L-lactate, D-lactate, pyruvate, acetate, propionate, valerate and butyrate), mocarboxylate drugs (nicotinate, benzoate, salicylate and 5-aminosalicylate) and ketone bodies (beta-D-hydroxybutyrate, acetoacetate and alpha-ketoisocaproate), with a Na(+):substrate stoichiometry of between 4:1 and 2:1. Catalyzes passive carrier mediated diffusion of iodide. Mediates iodide transport from the thyrocyte into the colloid lumen through the apical membrane. Mediates sodium-coupled electrogenic transport of pyroglutamate (5-oxo-L-proline). Can mediate the transport of chloride, bromide, iodide and nitrate ions when external concentration of sodium ions is reduced. The sequence is that of Sodium-coupled monocarboxylate transporter 1 from Xenopus laevis (African clawed frog).